The following is a 216-amino-acid chain: Adenylate kinase (216 aa).

Gly10–Thr15 is a binding site for ATP. Residues Ser30 to Val59 form an NMP region. AMP-binding positions include Thr31, Arg36, Gln57–Val59, Gly85–Arg88, and Gln92. The LID stretch occupies residues Gly126–Asp163. Arg127 contributes to the ATP binding site. Residues Cys130 and Cys133 each coordinate Zn(2+). An ATP-binding site is contributed by Ser136–Tyr137. Residues Cys150 and Cys153 each coordinate Zn(2+). AMP is bound by residues Arg160 and Arg171. Residue Gln199 participates in ATP binding.

Belongs to the adenylate kinase family. Monomer.

The protein localises to the cytoplasm. It catalyses the reaction AMP + ATP = 2 ADP. The protein operates within purine metabolism; AMP biosynthesis via salvage pathway; AMP from ADP: step 1/1. Its function is as follows. Catalyzes the reversible transfer of the terminal phosphate group between ATP and AMP. Plays an important role in cellular energy homeostasis and in adenine nucleotide metabolism. In Clostridium perfringens (strain ATCC 13124 / DSM 756 / JCM 1290 / NCIMB 6125 / NCTC 8237 / Type A), this protein is Adenylate kinase.